A 395-amino-acid chain; its full sequence is MSEQADKCNSRWKDEAMQNGYIPSYLDKDELCVVCGDKATGYHYRCITCEGCKGFFRRTIQKNLNPTYACKYEGKCVIDKVTRNQCQECRFKKCIAVGMATDLVLDDSKRLAKRKLIEENRERRRREELQKTVWDRPEPTQEEWEMIRVVTEAHMATNAQGNHWKQKRKFLSAVGVKEAKPEDIGSAPIVNAPEGNKVDIEAFSQFTKIITPAITRVVDFAKKLPMFCELPCEDQIILLKGCCMEIMSLRAAVRYDPESDTLTLNGEMAVTRGQLKNGGLGVVSDAIFDLGVSLSSFNLDDSEVALLQAVILLSSDRPGLTSVERIERCQEEFLLAFEHYINYRKHKVAHFWPKLLMKVTDLRMIGACHASRFLHMKVECPTELFPPLFLEVFED.

Residues 1 to 31 are modulating; that stretch reads MSEQADKCNSRWKDEAMQNGYIPSYLDKDEL. Residues 29-106 constitute a DNA-binding region (nuclear receptor); that stretch reads DELCVVCGDK…VGMATDLVLD (78 aa). Zn(2+) contacts are provided by C32, C35, C49, C52, C70, C76, C86, and C89. NR C4-type zinc fingers lie at residues 32 to 52 and 70 to 89; these read CVVCGDKATGYHYRCITCEGC and CKYEGKCVIDKVTRNQCQEC. Residues 142–395 form the NR LBD domain; it reads EEWEMIRVVT…PPLFLEVFED (254 aa). The 3,3',5-triiodo-L-thyronine site is built by R216, N265, and H369.

Belongs to the nuclear hormone receptor family. NR1 subfamily. Interacts (via the ligand-binding domain) with ncoa2. In terms of tissue distribution, widely expressed in a range of adult tissues including the brain, eye, fin, gill, intestine, liver, swim bladder and ovary. In the eye, expressed in the outer nuclear layer of the retina.

Its subcellular location is the nucleus. Nuclear hormone receptor that can act as a repressor or activator of transcription. High affinity receptor for the thyroid gland hormone triiodothyronine (T3). Transactivating activity is ligand-dependent, and is repressed in the absence of T3. The protein is Thyroid hormone receptor beta (thrb) of Danio rerio (Zebrafish).